Here is a 64-residue protein sequence, read N- to C-terminus: Large ribosomal subunit protein bL32 (64 aa).

The segment at M1–E35 is disordered.

The protein belongs to the bacterial ribosomal protein bL32 family.

The chain is Large ribosomal subunit protein bL32 from Stenotrophomonas maltophilia (strain R551-3).